A 494-amino-acid polypeptide reads, in one-letter code: Ketol-acid reductoisomerase (NADP(+)) (494 aa).

The 195-residue stretch at 14 to 208 folds into the KARI N-terminal Rossmann domain; the sequence is LDQLGRCRFM…GGHRAGVLES (195 aa). Residues 45–48, R68, R76, S78, and 108–110 contribute to the NADP(+) site; these read CGAQ and DKQ. Residue H132 is part of the active site. Position 158 (G158) interacts with NADP(+). 2 consecutive KARI C-terminal knotted domains span residues 209–344 and 345–487; these read SFVA…NYPV and TDVE…MTDM. Mg(2+)-binding residues include D217, E221, E389, and E393. S414 serves as a coordination point for substrate.

Belongs to the ketol-acid reductoisomerase family. Mg(2+) is required as a cofactor.

The enzyme catalyses (2R)-2,3-dihydroxy-3-methylbutanoate + NADP(+) = (2S)-2-acetolactate + NADPH + H(+). The catalysed reaction is (2R,3R)-2,3-dihydroxy-3-methylpentanoate + NADP(+) = (S)-2-ethyl-2-hydroxy-3-oxobutanoate + NADPH + H(+). It participates in amino-acid biosynthesis; L-isoleucine biosynthesis; L-isoleucine from 2-oxobutanoate: step 2/4. It functions in the pathway amino-acid biosynthesis; L-valine biosynthesis; L-valine from pyruvate: step 2/4. Involved in the biosynthesis of branched-chain amino acids (BCAA). Catalyzes an alkyl-migration followed by a ketol-acid reduction of (S)-2-acetolactate (S2AL) to yield (R)-2,3-dihydroxy-isovalerate. In the isomerase reaction, S2AL is rearranged via a Mg-dependent methyl migration to produce 3-hydroxy-3-methyl-2-ketobutyrate (HMKB). In the reductase reaction, this 2-ketoacid undergoes a metal-dependent reduction by NADPH to yield (R)-2,3-dihydroxy-isovalerate. This Photobacterium profundum (strain SS9) protein is Ketol-acid reductoisomerase (NADP(+)).